The primary structure comprises 443 residues: MEEDIDTRKINNSFLRDHSYATEADIISTVEFNHTGELLATGDKGGRVVIFQREQESKNQVHRRGEYNVYSTFQSHEPEFDYLKSLEIEEKINKIRWLPQQNAAYFLLSTNDKTVKLWKVSERDKRPEGYNLKDEEGRLRDPATITTLRVPVLRPMDLMVEATPRRVFANAHTYHINSISVNSDYETYMSADDLRINLWNFEITNQSFNIVDIKPANMEELTEVITAAEFHPHHCNTFVYSSSKGTIRLCDMRASALCDRHTKFFEEPEDPSNRSFFSEIISSISDVKFSHSGRYIMTRDYLTAKVWDLNMENRPVETYQVHDYLRSKLCSLYENDCIFDKFECVWNGSDSVIMTGSYNNFFRMFDRNTKRDVTLEASRENSKPRAILKPRKVCVGGKRRKDEISVDSLDFSKKILHTAWHPSENIIAVAATNNLYIFQDKVN.

WD repeat units lie at residues 22 to 61, 87 to 128, 171 to 209, and 220 to 260; these read TEAD…KNQV, EIEE…KRPE, AHTY…QSFN, and ELTE…LCDR. Serine 275 is modified (phosphoserine). WD repeat units lie at residues 279–317, 334–375, and 410–442; these read EIIS…RPVE, ENDC…DVTL, and DFSK…QDKV. Tyrosine 295 is modified (phosphotyrosine). At threonine 298 the chain carries Phosphothreonine.

Belongs to the phosphatase 2A regulatory subunit B family. As to quaternary structure, PP2A consists of a common heterodimeric core enzyme, composed of a 36 kDa catalytic subunit (subunit C) and a 65 kDa constant regulatory subunit (PR65 or subunit A), that associates with a variety of regulatory subunits. Proteins that associate with the core dimer include three families of regulatory subunits B (the R2/B/PR55/B55, R3/B''/PR72/PR130/PR59 and R5/B'/B56 families), the 48 kDa variable regulatory subunit, viral proteins, and cell signaling molecules. Interacts with IER5 (via N- and C-terminal regions). Interacts with TOMM22. As to expression, expressed in the brain. Isoform 1 and isoform 2 are expressed in the forbrain. Isoform 1 is more strongly expressed than isoform 2 in the olfactory bulb. Isoform 1 and isoform 2 are weakly expressed in the cerebellum. Isoform 1 is expressed in the testis. Isoform 2 expression is undetectable at birth rising to adult level at day 14.

The protein localises to the cytoplasm. Its subcellular location is the cytoskeleton. It is found in the membrane. The protein resides in the mitochondrion. It localises to the mitochondrion outer membrane. The B regulatory subunit might modulate substrate selectivity and catalytic activity, and might also direct the localization of the catalytic enzyme to a particular subcellular compartment. Within the PP2A holoenzyme complex, isoform 2 is required to promote proapoptotic activity. Isoform 2 regulates neuronal survival through the mitochondrial fission and fusion balance. The protein is Serine/threonine-protein phosphatase 2A 55 kDa regulatory subunit B beta isoform (Ppp2r2b) of Rattus norvegicus (Rat).